We begin with the raw amino-acid sequence, 531 residues long: UDP-glucuronosyltransferase 1A3 (531 aa).

A signal peptide spans 1–25 (MGIQGFLQKLSGLLLLLCALPWAEG). N116, N139, N293, and N431 each carry an N-linked (GlcNAc...) asparagine glycan. The helical transmembrane segment at 489–505 (VIGFLLAIVLTVVFIVY) threads the bilayer.

Belongs to the UDP-glycosyltransferase family. Homodimers. Homooligomer. Interacts with UGT1A1, UGT1A4, UGT1A6, UGT1A7, UGT1A8, UGT1A9 and UGT1A10 to form heterodimers.

It localises to the endoplasmic reticulum membrane. The catalysed reaction is glucuronate acceptor + UDP-alpha-D-glucuronate = acceptor beta-D-glucuronoside + UDP + H(+). It catalyses the reaction 17beta-estradiol + UDP-alpha-D-glucuronate = 17beta-estradiol 3-O-(beta-D-glucuronate) + UDP + H(+). It carries out the reaction 17beta-estradiol + UDP-alpha-D-glucuronate = 17beta-estradiol 17-O-(beta-D-glucuronate) + UDP + H(+). The enzyme catalyses 17alpha-estradiol + UDP-alpha-D-glucuronate = 17alpha-estradiol 3-O-(beta-D-glucuronate) + UDP + H(+). The catalysed reaction is estrone + UDP-alpha-D-glucuronate = estrone 3-O-(beta-D-glucuronate) + UDP + H(+). It catalyses the reaction chenodeoxycholate + UDP-alpha-D-glucuronate = chenodeoxycholoyl-24-O-(beta-D-glucuronate) + UDP. It carries out the reaction deoxycholate + UDP-alpha-D-glucuronate = deoxycholoyl-24-O-(beta-D-glucuronate) + UDP. The enzyme catalyses lithocholate + UDP-alpha-D-glucuronate = lithocholoyl-24-O-(beta-D-glucuronate) + UDP. The catalysed reaction is hyodeoxycholate + UDP-alpha-D-glucuronate = hyodeoxycholoyl-24-O-(beta-D-glucuronate) + UDP. It catalyses the reaction hyocholate + UDP-alpha-D-glucuronate = hyocholoyl-24-O-(beta-D-glucuronate) + UDP. It carries out the reaction calcidiol + UDP-alpha-D-glucuronate = calcidiol 25-O-(beta-D-glucuronide) + UDP + H(+). The enzyme catalyses losartan + UDP-alpha-D-glucuronate = losartan-2-N-beta-D-glucuronide + UDP. The catalysed reaction is candesartan + UDP-alpha-D-glucuronate = candesartan-2-N-beta-D-glucuronide + UDP. It catalyses the reaction zolasartan + UDP-alpha-D-glucuronate = zolarsartan-2-N-beta-D-glucuronide + UDP. It carries out the reaction (E)-ferulate + UDP-alpha-D-glucuronate = (E)-4-O-(beta-D-glucuronosyl)-ferulate + UDP + H(+). The enzyme catalyses (E)-ferulate + UDP-alpha-D-glucuronate = (E)-ferulic acid beta-D-glucuronate ester + UDP. Functionally, UDP-glucuronosyltransferase (UGT) that catalyzes phase II biotransformation reactions in which lipophilic substrates are conjugated with glucuronic acid to increase the metabolite's water solubility, thereby facilitating excretion into either the urine or bile. Essential for the elimination and detoxification of drugs, xenobiotics and endogenous compounds. Catalyzes the glucuronidation of endogenous estrogen hormones such as estradiol and estrone. Contributes to bile acid (BA) detoxification by catalyzing the glucuronidation of BA substrates, which are natural detergents for dietary lipids absorption. Involved in the glucuronidation of calcidiol, which is the major circulating form of vitamin D3, essential for the regulation of calcium and phosphate homeostasis. Involved in the glucuronidation of the phytochemical ferulic acid at the phenolic or the carboxylic acid group. Involved in the glucuronidation of the AGTR1 angiotensin receptor antagonists losartan, candesartan and zolarsartan, which can inhibit the effect of angiotensin II. The polypeptide is UDP-glucuronosyltransferase 1A3 (Rattus norvegicus (Rat)).